A 175-amino-acid chain; its full sequence is Large ribosomal subunit protein eL14 (175 aa).

Positions 150–175 (KAAKMDSTEGAKRRMQKAIAARKAKK) are disordered. Residues 152–161 (AKMDSTEGAK) are compositionally biased toward basic and acidic residues. Residues 162 to 175 (RRMQKAIAARKAKK) show a composition bias toward basic residues.

This sequence belongs to the eukaryotic ribosomal protein eL14 family.

Component of the large ribosomal subunit. The ribosome is a large ribonucleoprotein complex responsible for the synthesis of proteins in the cell. The chain is Large ribosomal subunit protein eL14 (RPL14) from Leishmania donovani.